The following is a 209-amino-acid chain: Nucleoside triphosphate pyrophosphatase (209 aa).

Asp74 serves as the catalytic Proton acceptor.

This sequence belongs to the Maf family. The cofactor is a divalent metal cation.

The protein resides in the cytoplasm. The enzyme catalyses a ribonucleoside 5'-triphosphate + H2O = a ribonucleoside 5'-phosphate + diphosphate + H(+). It carries out the reaction a 2'-deoxyribonucleoside 5'-triphosphate + H2O = a 2'-deoxyribonucleoside 5'-phosphate + diphosphate + H(+). In terms of biological role, nucleoside triphosphate pyrophosphatase. May have a dual role in cell division arrest and in preventing the incorporation of modified nucleotides into cellular nucleic acids. In Neorickettsia sennetsu (strain ATCC VR-367 / Miyayama) (Ehrlichia sennetsu), this protein is Nucleoside triphosphate pyrophosphatase.